The sequence spans 975 residues: Probable ATP-dependent RNA helicase CG8611 (975 aa).

A compositionally biased stretch (polar residues) spans 1 to 24 (MVENISLNVTVKSSARKNQQQSPA). Disordered regions lie at residues 1-38 (MVEN…QDFD), 50-104 (AIVV…DDLM), and 127-295 (TTKP…FRTK). Low complexity predominate over residues 64 to 94 (PTNSSVPNTTKSPTPSVSSSKSAISTLSASP). Phosphoserine is present on residues serine 75 and serine 99. Positions 190–203 (QLEEERRQKRREEG) are enriched in basic and acidic residues. Residues serine 210, serine 220, and serine 224 each carry the phosphoserine modification. Positions 242 to 261 (IEDSGESGEESATSDEEPDE) are enriched in acidic residues. Residues 269–285 (QEKEPKQTAKKPPKAEE) are compositionally biased toward basic and acidic residues. The Q motif signature appears at 327–356 (SKISTLGLHPHAVKNLEDLLSIRELTSVQQ). The Helicase ATP-binding domain occupies 359–548 (IPEVLQGKDV…GLTLKNPLYI (190 aa)). 372–379 (SQTGSGKT) is a binding site for ATP. A DEAD box motif is present at residues 485-488 (DEAD). A Helicase C-terminal domain is found at 616 to 789 (LLAKEVDASP…DMYAYLQTLL (174 aa)). Phosphoserine is present on serine 667. 2 disordered regions span residues 915-942 (LQQR…VGRS) and 955-975 (NMSE…RKQA).

Belongs to the DEAD box helicase family. DDX31/DBP7 subfamily.

The catalysed reaction is ATP + H2O = ADP + phosphate + H(+). Its function is as follows. Probable ATP-dependent RNA helicase. The protein is Probable ATP-dependent RNA helicase CG8611 of Drosophila melanogaster (Fruit fly).